Reading from the N-terminus, the 271-residue chain is Collectin-11 (271 aa).

The first 25 residues, 1–25 (MVGEKLVAYMLVSVLGLALLRSVFG), serve as a signal peptide directing secretion. The 60-residue stretch at 44 to 103 (GEAGEKGEKGAPGRPGRVGPTGEQGPPGDKGQKGSPGRYGKMGPTGPKGLKGDMGDPGPK) folds into the Collagen-like domain. The disordered stretch occupies residues 46–112 (AGEKGEKGAP…KGPNGEPGVP (67 aa)). Positions 124-148 (EMDIQVVQLTNELKFIKNAVAGIKE) form a coiled coil. A C-type lectin domain is found at 149–265 (TDSKVYLLVK…CQLTMYFVCE (117 aa)). 2 cysteine pairs are disulfide-bonded: Cys170–Cys264 and Cys242–Cys256. Arg200 is a binding site for a carbohydrate. Ca(2+)-binding residues include Asp207, Glu211, Glu232, Asn234, Asn235, Asp238, Glu240, and Asp241. Position 240 (Glu240) interacts with a carbohydrate. Residues Glu244 and 252 to 254 (IDV) each bind a carbohydrate. Asp253 contributes to the Ca(2+) binding site.

This sequence belongs to the COLEC10/COLEC11 family. In terms of assembly, homotrimer; disulfide-linked. Interacts with MASP1; probably triggers the lectin pathway of complement.

The protein resides in the secreted. Its function is as follows. Lectin that plays a role in innate immunity, apoptosis and embryogenesis. Calcium-dependent lectin that binds self and non-self glycoproteins presenting high mannose oligosaccharides with at least one terminal alpha-1,2-linked mannose epitope. Primarily recognizes the terminal disaccharide of the glycan. Also recognizes a subset of fucosylated glycans and lipopolysaccharides. Plays a role in innate immunity through its ability to bind non-self sugars presented by microorganisms and to activate the complement through the recruitment of MAPS1. Also plays a role in apoptosis through its ability to bind in a calcium-independent manner the DNA present at the surface of apoptotic cells and to activate the complement in response to this binding. Finally, plays a role in development, probably serving as a guidance cue during the migration of neural crest cells and other cell types during embryogenesis. This Danio rerio (Zebrafish) protein is Collectin-11 (colec11).